The sequence spans 215 residues: Hibernation-associated plasma protein HP-25 (215 aa).

The signal sequence occupies residues 1–28; sequence MPAQRGGALSMGAAGFWILVLSITSALA. Positions 29 to 96 are disordered; the sequence is DSNNQGNSEP…RPKSAFAVKL (68 aa). Pro residues-rich tracts occupy residues 39–51 and 60–77; these read CGPP…PGIP and LGPP…PQGP. The Collagen-like domain occupies 40–81; it reads GPPGPPGPPGIPGFPGAPGALGPPGPPGVPGIPGPQGPPGDV. Residues 85-215 form the C1q domain; that stretch reads SSRPKSAFAV…VFFGYLLYGK (131 aa). N167 is a glycosylation site (N-linked (GlcNAc...) asparagine).

In terms of tissue distribution, plasma; synthesized in the liver.

It localises to the secreted. Its function is as follows. Plasma proteins HP-20, HP-25, HP-27 and HP-55 form a 140 kDa complex via disulfide bonds in the plasma and are hibernation specific. The sequence is that of Hibernation-associated plasma protein HP-25 from Tamias sibiricus (Siberian chipmunk).